Here is a 397-residue protein sequence, read N- to C-terminus: Pectate lyase (397 aa).

A signal peptide spans 1-25 (MDVYRIRISVFFLLVLLTFAALTTA). Residue asparagine 134 is glycosylated (N-linked (GlcNAc...) asparagine). Residues aspartate 191, aspartate 216, and aspartate 220 each coordinate Ca(2+). The N-linked (GlcNAc...) asparagine glycan is linked to asparagine 227. Residue arginine 272 is part of the active site.

Belongs to the polysaccharide lyase 1 family. The cofactor is Ca(2+).

The catalysed reaction is Eliminative cleavage of (1-&gt;4)-alpha-D-galacturonan to give oligosaccharides with 4-deoxy-alpha-D-galact-4-enuronosyl groups at their non-reducing ends.. Its pathway is glycan metabolism; pectin degradation; 2-dehydro-3-deoxy-D-gluconate from pectin: step 2/5. This is Pectate lyase from Nicotiana tabacum (Common tobacco).